A 216-amino-acid chain; its full sequence is Large ribosomal subunit protein uL3 (216 aa).

A disordered region spans residues 136–155 (GVSISHRSHGSTGQRQDPGK). Gln151 bears the N5-methylglutamine mark.

The protein belongs to the universal ribosomal protein uL3 family. As to quaternary structure, part of the 50S ribosomal subunit. Forms a cluster with proteins L14 and L19. Methylated by PrmB.

Its function is as follows. One of the primary rRNA binding proteins, it binds directly near the 3'-end of the 23S rRNA, where it nucleates assembly of the 50S subunit. The sequence is that of Large ribosomal subunit protein uL3 from Rickettsia prowazekii (strain Madrid E).